Here is a 91-residue protein sequence, read N- to C-terminus: Small ribosomal subunit protein uS15 (91 aa).

It belongs to the universal ribosomal protein uS15 family. As to quaternary structure, part of the 30S ribosomal subunit. Forms a bridge to the 50S subunit in the 70S ribosome, contacting the 23S rRNA.

One of the primary rRNA binding proteins, it binds directly to 16S rRNA where it helps nucleate assembly of the platform of the 30S subunit by binding and bridging several RNA helices of the 16S rRNA. Functionally, forms an intersubunit bridge (bridge B4) with the 23S rRNA of the 50S subunit in the ribosome. This Rickettsia peacockii (strain Rustic) protein is Small ribosomal subunit protein uS15.